Consider the following 85-residue polypeptide: Large ribosomal subunit protein bL27 (85 aa).

The protein belongs to the bacterial ribosomal protein bL27 family.

This is Large ribosomal subunit protein bL27 from Xylella fastidiosa (strain Temecula1 / ATCC 700964).